The following is a 118-amino-acid chain: Large ribosomal subunit protein bL20 (118 aa).

Belongs to the bacterial ribosomal protein bL20 family.

In terms of biological role, binds directly to 23S ribosomal RNA and is necessary for the in vitro assembly process of the 50S ribosomal subunit. It is not involved in the protein synthesizing functions of that subunit. The sequence is that of Large ribosomal subunit protein bL20 from Thermotoga neapolitana (strain ATCC 49049 / DSM 4359 / NBRC 107923 / NS-E).